We begin with the raw amino-acid sequence, 291 residues long: Taste receptor type 2 member 16 (291 aa).

A topological domain (extracellular) is located at residue Met1. A helical transmembrane segment spans residues 2–22 (IPIQLTVFFMIIYVLESLTII). Over 23-41 (VQSSLIVAVLGREWLQVRR) the chain is Cytoplasmic. A helical transmembrane segment spans residues 42–62 (LMPVDMILISLGISRFCLQWA). At 63-84 (SMLNBFCSYFNLNYVLCNLTIT) the chain is on the extracellular side. A glycan (N-linked (GlcNAc...) asparagine) is linked at Asn80. Residues 85 to 105 (WEFFNILTFWLNSLLTVFYCI) traverse the membrane as a helical segment. The Cytoplasmic portion of the chain corresponds to 106-125 (KVSSFTHHIFLWLRWRILRL). Residues 126–146 (FPWILLGSLMITCVTIIPSAI) traverse the membrane as a helical segment. The Extracellular segment spans residues 147–182 (GNYIQIQLLTMEHLPRNSTVTDKLEKFHQYEFQAHT). Residue Asn163 is glycosylated (N-linked (GlcNAc...) asparagine). The chain crosses the membrane as a helical span at residues 183 to 203 (VALVIPFILFLASTILLMASL). Residues 204–228 (TKQIQHHSTGHCNPSMKAHFTALRS) are Cytoplasmic-facing. A helical membrane pass occupies residues 229-249 (LAVLFIVFTSYFLTILITIIG). Over 250 to 257 (TLFDRRCW) the chain is Extracellular. A helical transmembrane segment spans residues 258 to 278 (LWVWEAFVYAFILMHSTSLML). The Cytoplasmic segment spans residues 279–291 (SSPTLKRILKGKC).

Belongs to the G-protein coupled receptor T2R family. In terms of assembly, interacts with RTP3 and RTP4.

Its subcellular location is the cell membrane. Its function is as follows. Receptor that may play a role in the perception of bitterness and is gustducin-linked. May play a role in sensing the chemical composition of the gastrointestinal content. The activity of this receptor may stimulate alpha gustducin, mediate PLC-beta-2 activation and lead to the gating of TRPM5. The sequence is that of Taste receptor type 2 member 16 (TAS2R16) from Gorilla gorilla gorilla (Western lowland gorilla).